An 878-amino-acid polypeptide reads, in one-letter code: Pyruvate, phosphate dikinase (878 aa).

The tract at residues 1–347 (MKKLIYYFGS…LYILQTRTAK (347 aa)) is N-terminal. An ATP-binding site is contributed by Arg-96. The linker 1 stretch occupies residues 348–404 (RTAIAAIKIAVQMVEEKLISKEQALMRIDPESLNQLLHTRIDYSKGLTSIADGLPAS). The segment at 405–502 (PGAATGIIVF…ILKQDDIITI (98 aa)) is central. Thr-457 bears the Phosphothreonine; by PDRP1 mark. The active-site Tele-phosphohistidine intermediate is His-459. The linker 2 stretch occupies residues 503 to 537 (DGGTGKVFLGAVPLIQPTFSEESKLILEWADETSK). Residues 538–878 (LKIRTNAETV…AAAQAKIKHG (341 aa)) form a C-terminal region. Positions 565, 621, 749, 770, 771, 772, and 773 each coordinate substrate. Mg(2+) is bound at residue Glu-749. Position 773 (Asp-773) interacts with Mg(2+). Cys-835 (proton donor) is an active-site residue.

Belongs to the PEP-utilizing enzyme family. In terms of assembly, homodimer. The cofactor is Mg(2+). Post-translationally, phosphorylation of Thr-457 in the dark inactivates the enzyme. Dephosphorylation upon light stimulation reactivates the enzyme.

It catalyses the reaction pyruvate + phosphate + ATP = phosphoenolpyruvate + AMP + diphosphate + H(+). Its activity is regulated as follows. Activated by light-induced dephosphorylation. Inhibited by dark-induced phosphorylation. Both reactions are catalyzed by PDRP1. Its function is as follows. Catalyzes the reversible phosphorylation of pyruvate and phosphate. This Rickettsia bellii (strain RML369-C) protein is Pyruvate, phosphate dikinase (ppdK).